A 738-amino-acid polypeptide reads, in one-letter code: Catalase-peroxidase (738 aa).

Positions 1-13 are enriched in gly residues; that stretch reads MDGQDIGAGGGCP. The disordered stretch occupies residues 1-26; that stretch reads MDGQDIGAGGGCPFSGANTNKGRRSN. Residues 98-226 constitute a cross-link (tryptophyl-tyrosyl-methioninium (Trp-Tyr) (with M-252)); sequence WHSAGTYRTA…LAAVQMGLIY (129 aa). His99 (proton acceptor) is an active-site residue. The segment at residues 226–252 is a cross-link (tryptophyl-tyrosyl-methioninium (Tyr-Met) (with W-98)); the sequence is YVNPEGPDGNPDPIASGRDIRETFARM. His267 is a binding site for heme b.

This sequence belongs to the peroxidase family. Peroxidase/catalase subfamily. Homodimer or homotetramer. Requires heme b as cofactor. Formation of the three residue Trp-Tyr-Met cross-link is important for the catalase, but not the peroxidase activity of the enzyme.

The catalysed reaction is H2O2 + AH2 = A + 2 H2O. It carries out the reaction 2 H2O2 = O2 + 2 H2O. In terms of biological role, bifunctional enzyme with both catalase and broad-spectrum peroxidase activity. In Ruegeria sp. (strain TM1040) (Silicibacter sp.), this protein is Catalase-peroxidase.